The primary structure comprises 145 residues: D-aminoacyl-tRNA deacylase (145 aa).

The Gly-cisPro motif, important for rejection of L-amino acids motif lies at 137 to 138 (GP).

The protein belongs to the DTD family. In terms of assembly, homodimer.

It localises to the cytoplasm. The catalysed reaction is glycyl-tRNA(Ala) + H2O = tRNA(Ala) + glycine + H(+). The enzyme catalyses a D-aminoacyl-tRNA + H2O = a tRNA + a D-alpha-amino acid + H(+). An aminoacyl-tRNA editing enzyme that deacylates mischarged D-aminoacyl-tRNAs. Also deacylates mischarged glycyl-tRNA(Ala), protecting cells against glycine mischarging by AlaRS. Acts via tRNA-based rather than protein-based catalysis; rejects L-amino acids rather than detecting D-amino acids in the active site. By recycling D-aminoacyl-tRNA to D-amino acids and free tRNA molecules, this enzyme counteracts the toxicity associated with the formation of D-aminoacyl-tRNA entities in vivo and helps enforce protein L-homochirality. The protein is D-aminoacyl-tRNA deacylase of Dichelobacter nodosus (strain VCS1703A).